We begin with the raw amino-acid sequence, 447 residues long: MKGYEVNFDGLVGPTHHYAGLSFGNEASTKNRNNLSNPKLAAKQGLLKMKALADMGMKQGVLAPHERPHVPMLRRLGFTGDDISVVAQAMRYSPELLSSLSSASPMWTANAATVSPSADSQDERVHFTAANLNNKFHRSIEAETTSQVLQAIFKNERHFVHHEALPQVALFGDEGAANHNRLGGDYAKRGVQVFVYGQQHLNNGLPGPKRYPARQTREASEAIARLHRLDEAHTVFVQQNPDVIDQGVFHNDVIAVSNQQVLFHHQHAFLNQDQAFAEIRQKMASIGEDFISIEVPENRVTVDDAVATYLFNSQILTRPDGGMTIVVPEESRQNAAVWSYLNDMIQMGTPIDAIQVYDLRESMRNGGGPACLRLRVALNETELNAVNPKVLMNDQLFMTLNQWVDKHYRDRLAQEDLADPHLLMESRMALDELTKILGLGSVYPFQK.

Substrate contacts are provided by residues Ala-19–Ser-28, Asn-110, and His-137–Arg-138. Residue Glu-174 is part of the active site. Arg-214 is a substrate binding site. The active site involves His-250. Asp-252 and Asn-365 together coordinate substrate. The Nucleophile role is filled by Cys-371.

This sequence belongs to the succinylarginine dihydrolase family. In terms of assembly, homodimer.

It carries out the reaction N(2)-succinyl-L-arginine + 2 H2O + 2 H(+) = N(2)-succinyl-L-ornithine + 2 NH4(+) + CO2. It participates in amino-acid degradation; L-arginine degradation via AST pathway; L-glutamate and succinate from L-arginine: step 2/5. Its function is as follows. Catalyzes the hydrolysis of N(2)-succinylarginine into N(2)-succinylornithine, ammonia and CO(2). The sequence is that of N-succinylarginine dihydrolase from Acinetobacter baumannii (strain ATCC 17978 / DSM 105126 / CIP 53.77 / LMG 1025 / NCDC KC755 / 5377).